Reading from the N-terminus, the 196-residue chain is Small ribosomal subunit protein uS4c (196 aa).

A disordered region spans residues Gly16–Lys40. An S4 RNA-binding domain is found at Met89–Ile152.

The protein belongs to the universal ribosomal protein uS4 family. As to quaternary structure, part of the 30S ribosomal subunit. Contacts protein S5. The interaction surface between S4 and S5 is involved in control of translational fidelity.

Its subcellular location is the plastid. It is found in the chloroplast. Its function is as follows. One of the primary rRNA binding proteins, it binds directly to 16S rRNA where it nucleates assembly of the body of the 30S subunit. Functionally, with S5 and S12 plays an important role in translational accuracy. The protein is Small ribosomal subunit protein uS4c (rps4) of Anthoxanthum odoratum (Sweet vernal grass).